The sequence spans 880 residues: Probable potassium channel AKT5 (880 aa).

Residues 1 to 82 (MGIEKRKKMV…PFDPRYRAWD (82 aa)) are Cytoplasmic-facing. The helical transmembrane segment at 83–103 (WFLVILVLYTAWASPFEFGFL) threads the bilayer. Residues 104-111 (QTPRAPLS) are Extracellular-facing. A helical transmembrane segment spans residues 112-132 (ILDNVVNGFFAVDIVLTFFVA). At 133-153 (FLDKATYLLVDDPKRIAWRYT) the chain is on the cytoplasmic side. A helical transmembrane segment spans residues 154–174 (STWLIFDVVSTVPYELFGSLL). Over 175-182 (HNTIQGYG) the chain is Extracellular. Residues 183–203 (IFSMLRLWRLHRVSKCFARLE) traverse the membrane as a helical; Voltage-sensor segment. Residues 204–217 (KDRKYNYFWIRCTK) lie on the Cytoplasmic side of the membrane. Residues 218–238 (LLLVSLFVVHCGACFCYSIAA) form a helical membrane-spanning segment. Topologically, residues 239 to 265 (HYPDPSMTFMALAEANWKQKSLLIRYV) are extracellular. The segment at residues 266-285 (TAMYWSITTFSTTGYGDIHG) is an intramembrane region (pore-forming). The Extracellular portion of the chain corresponds to 286–291 (NNAEER). A helical membrane pass occupies residues 292–312 (AFILFYMIFNLGLLAYIIGNM). At 313 to 880 (TNLVVHVTSR…GDFLLLLKVS (568 aa)) the chain is on the cytoplasmic side. Residue 396–517 (LFHGISNDLL…IMNNLLQHLK (122 aa)) participates in a nucleoside 3',5'-cyclic phosphate binding. ANK repeat units follow at residues 541-570 (DLPL…NPNE), 574-603 (NGRT…DPNI), 607-636 (EGSV…TLSF), 637-667 (DTVG…DISL), and 671-700 (NGTT…DMDK). Residues 809–880 (VGGVYPARVT…GDFLLLLKVS (72 aa)) enclose the KHA domain.

It belongs to the potassium channel family. Plant (TC 1.A.1.4) subfamily. The potassium channel is probably composed of a homo- or heterotetrameric complex of pore-forming subunits. Predominantly expressed in flowers.

It is found in the membrane. Its function is as follows. Probable potassium channel. May interact with the cytoskeleton or with regulatory proteins. The polypeptide is Probable potassium channel AKT5 (AKT5) (Arabidopsis thaliana (Mouse-ear cress)).